Here is a 177-residue protein sequence, read N- to C-terminus: VQ motif-containing protein 11 (177 aa).

A VQ motif is present at residues 25–34; that stretch reads FRNIVQKLTG. 5 positions are modified to phosphoserine: Ser-43, Ser-99, Ser-115, Ser-142, and Ser-145. Over residues 115–133 the composition is skewed to basic and acidic residues; that stretch reads SAREEHHAQPDKEEQKAIA. Residues 115-177 form a disordered region; it reads SAREEHHAQP…RIHEDNHRDS (63 aa). Residues 148-159 are compositionally biased toward low complexity; it reads EPAPELLPLFPL. Position 161 is a phosphoserine (Ser-161). The span at 168–177 shows a compositional bias: basic and acidic residues; sequence RIHEDNHRDS.

In terms of processing, phosphorylated on serine residues by MPK6.

Its subcellular location is the nucleus. May modulate WRKY transcription factor activities. The polypeptide is VQ motif-containing protein 11 (Arabidopsis thaliana (Mouse-ear cress)).